We begin with the raw amino-acid sequence, 75 residues long: ATP synthase subunit c (75 aa).

Helical transmembrane passes span 13 to 33 (LNVVGYGLAAIGPGIGLGILI) and 54 to 74 (MFLGLAFVEVLALLGFVLAFI).

It belongs to the ATPase C chain family. In terms of assembly, F-type ATPases have 2 components, F(1) - the catalytic core - and F(0) - the membrane proton channel. F(1) has five subunits: alpha(3), beta(3), gamma(1), delta(1), epsilon(1). F(0) has three main subunits: a(1), b(2) and c(10-14). The alpha and beta chains form an alternating ring which encloses part of the gamma chain. F(1) is attached to F(0) by a central stalk formed by the gamma and epsilon chains, while a peripheral stalk is formed by the delta and b chains.

Its subcellular location is the cell membrane. Functionally, f(1)F(0) ATP synthase produces ATP from ADP in the presence of a proton or sodium gradient. F-type ATPases consist of two structural domains, F(1) containing the extramembraneous catalytic core and F(0) containing the membrane proton channel, linked together by a central stalk and a peripheral stalk. During catalysis, ATP synthesis in the catalytic domain of F(1) is coupled via a rotary mechanism of the central stalk subunits to proton translocation. In terms of biological role, key component of the F(0) channel; it plays a direct role in translocation across the membrane. A homomeric c-ring of between 10-14 subunits forms the central stalk rotor element with the F(1) delta and epsilon subunits. The sequence is that of ATP synthase subunit c from Bifidobacterium adolescentis (strain ATCC 15703 / DSM 20083 / NCTC 11814 / E194a).